We begin with the raw amino-acid sequence, 317 residues long: Beta-ketoacyl-[acyl-carrier-protein] synthase III (317 aa).

Residues Cys-112 and His-244 contribute to the active site. An ACP-binding region spans residues 245–249 (QANLR). Asn-274 is an active-site residue.

Belongs to the thiolase-like superfamily. FabH family. In terms of assembly, homodimer.

The protein localises to the cytoplasm. The catalysed reaction is malonyl-[ACP] + acetyl-CoA + H(+) = 3-oxobutanoyl-[ACP] + CO2 + CoA. It participates in lipid metabolism; fatty acid biosynthesis. Its function is as follows. Catalyzes the condensation reaction of fatty acid synthesis by the addition to an acyl acceptor of two carbons from malonyl-ACP. Catalyzes the first condensation reaction which initiates fatty acid synthesis and may therefore play a role in governing the total rate of fatty acid production. Possesses both acetoacetyl-ACP synthase and acetyl transacylase activities. Its substrate specificity determines the biosynthesis of branched-chain and/or straight-chain of fatty acids. The protein is Beta-ketoacyl-[acyl-carrier-protein] synthase III of Salmonella typhi.